A 150-amino-acid chain; its full sequence is Clitocypin (150 aa).

This sequence belongs to the protease inhibitor I48 family. Homodimer. Uniformly expressed throughout the mature fruiting body (at mRNA and protein level).

Its function is as follows. Binds and inhibits cysteine proteinases. Inhibits most strongly papain and cathepsin L, more weakly bromelain and cathepsin B while it is completely ineffective against cathepsin H. This chain is Clitocypin (Cnc1), found in Clitocybe nebularis (Clouded agaric).